A 259-amino-acid polypeptide reads, in one-letter code: Tryptophan synthase alpha chain (259 aa).

Active-site proton acceptor residues include Glu-52 and Asp-63.

This sequence belongs to the TrpA family. Tetramer of two alpha and two beta chains.

The catalysed reaction is (1S,2R)-1-C-(indol-3-yl)glycerol 3-phosphate + L-serine = D-glyceraldehyde 3-phosphate + L-tryptophan + H2O. The protein operates within amino-acid biosynthesis; L-tryptophan biosynthesis; L-tryptophan from chorismate: step 5/5. In terms of biological role, the alpha subunit is responsible for the aldol cleavage of indoleglycerol phosphate to indole and glyceraldehyde 3-phosphate. The chain is Tryptophan synthase alpha chain from Streptococcus sanguinis (strain SK36).